The chain runs to 218 residues: Fucoxanthin-chlorophyll a-c binding protein, chloroplastic (218 aa).

A chloroplast-targeting transit peptide spans 1–36 (MFYSAAVAALMVGSASAFLAPAQFNSVAKSSGALSM).

This sequence belongs to the fucoxanthin chlorophyll protein family. The LHC complex of chromophytic algae is composed of fucoxanthin, chlorophyll A and C bound non-covalently by fucoxanthin chlorophyll proteins (FCPs). The ratio of pigments in this LHC is; fucoxanthin: chlorophyll C: chlorophyll A; (0.6-1): (0.1-0.3): (1).

It is found in the plastid. It localises to the chloroplast thylakoid membrane. In terms of biological role, the light-harvesting complex (LHC) functions as a light receptor, it captures and delivers excitation energy to photosystems with which it is closely associated. Energy is transferred from the carotenoid and chlorophyll C (or B) to chlorophyll A and the photosynthetic reaction centers where it is used to synthesize ATP and reducing power. The chain is Fucoxanthin-chlorophyll a-c binding protein, chloroplastic from Chattonella marina var. antiqua (Red tide flagellate).